The primary structure comprises 154 residues: 3-dehydroquinate dehydratase (154 aa).

Y26 serves as the catalytic Proton acceptor. 3 residues coordinate substrate: N77, H83, and D90. The active-site Proton donor is H103. Residues 104–105 (IS) and R114 each bind substrate.

The protein belongs to the type-II 3-dehydroquinase family. In terms of assembly, homododecamer.

It carries out the reaction 3-dehydroquinate = 3-dehydroshikimate + H2O. The protein operates within metabolic intermediate biosynthesis; chorismate biosynthesis; chorismate from D-erythrose 4-phosphate and phosphoenolpyruvate: step 3/7. Catalyzes a trans-dehydration via an enolate intermediate. This is 3-dehydroquinate dehydratase from Buchnera aphidicola subsp. Baizongia pistaciae (strain Bp).